The sequence spans 414 residues: Serine hydroxymethyltransferase (414 aa).

Residues Leu121 and 125 to 127 (GHL) contribute to the (6S)-5,6,7,8-tetrahydrofolate site. The residue at position 229 (Lys229) is an N6-(pyridoxal phosphate)lysine.

It belongs to the SHMT family. Homodimer. Pyridoxal 5'-phosphate is required as a cofactor.

It is found in the cytoplasm. The enzyme catalyses (6R)-5,10-methylene-5,6,7,8-tetrahydrofolate + glycine + H2O = (6S)-5,6,7,8-tetrahydrofolate + L-serine. It participates in one-carbon metabolism; tetrahydrofolate interconversion. The protein operates within amino-acid biosynthesis; glycine biosynthesis; glycine from L-serine: step 1/1. In terms of biological role, catalyzes the reversible interconversion of serine and glycine with tetrahydrofolate (THF) serving as the one-carbon carrier. This reaction serves as the major source of one-carbon groups required for the biosynthesis of purines, thymidylate, methionine, and other important biomolecules. Also exhibits THF-independent aldolase activity toward beta-hydroxyamino acids, producing glycine and aldehydes, via a retro-aldol mechanism. In Polaromonas naphthalenivorans (strain CJ2), this protein is Serine hydroxymethyltransferase.